The following is a 153-amino-acid chain: Ribosomal RNA large subunit methyltransferase H (153 aa).

S-adenosyl-L-methionine contacts are provided by residues L75, G102, and 121 to 126 (LSPLTM).

It belongs to the RNA methyltransferase RlmH family. In terms of assembly, homodimer.

It localises to the cytoplasm. The catalysed reaction is pseudouridine(1915) in 23S rRNA + S-adenosyl-L-methionine = N(3)-methylpseudouridine(1915) in 23S rRNA + S-adenosyl-L-homocysteine + H(+). Functionally, specifically methylates the pseudouridine at position 1915 (m3Psi1915) in 23S rRNA. The protein is Ribosomal RNA large subunit methyltransferase H of Nitratiruptor sp. (strain SB155-2).